The following is a 356-amino-acid chain: Tyrosine recombinase XerS (356 aa).

The region spanning 16-121 is the Core-binding (CB) domain; the sequence is TMPWYILEYY…ALSSLYKYLT (106 aa). In terms of domain architecture, Tyr recombinase spans 169-354; the sequence is EFLQYIDREY…VNDEQKNALN (186 aa). Residues R210, K234, H306, R309, and H332 contribute to the active site. Y341 acts as the O-(3'-phospho-DNA)-tyrosine intermediate in catalysis.

The protein belongs to the 'phage' integrase family. XerS subfamily.

The protein resides in the cytoplasm. Its activity is regulated as follows. FtsK is required for recombination. Its function is as follows. Site-specific tyrosine recombinase, which acts by catalyzing the cutting and rejoining of the recombining DNA molecules. Essential to convert dimers of the bacterial chromosome into monomers to permit their segregation at cell division. The chain is Tyrosine recombinase XerS from Streptococcus gordonii (strain Challis / ATCC 35105 / BCRC 15272 / CH1 / DL1 / V288).